Consider the following 433-residue polypeptide: Enolase (433 aa).

(2R)-2-phosphoglycerate is bound at residue glutamine 167. The active-site Proton donor is glutamate 209. Aspartate 246, glutamate 291, and aspartate 318 together coordinate Mg(2+). (2R)-2-phosphoglycerate contacts are provided by lysine 343, arginine 372, serine 373, and lysine 394. Lysine 343 serves as the catalytic Proton acceptor.

The protein belongs to the enolase family. As to quaternary structure, component of the RNA degradosome, a multiprotein complex involved in RNA processing and mRNA degradation. It depends on Mg(2+) as a cofactor.

The protein localises to the cytoplasm. Its subcellular location is the secreted. It is found in the cell surface. It carries out the reaction (2R)-2-phosphoglycerate = phosphoenolpyruvate + H2O. The protein operates within carbohydrate degradation; glycolysis; pyruvate from D-glyceraldehyde 3-phosphate: step 4/5. Its function is as follows. Catalyzes the reversible conversion of 2-phosphoglycerate (2-PG) into phosphoenolpyruvate (PEP). It is essential for the degradation of carbohydrates via glycolysis. This chain is Enolase, found in Marinomonas sp. (strain MWYL1).